The sequence spans 1199 residues: DNA polymerase beta (1199 aa).

Belongs to the DNA polymerase type-B family.

The catalysed reaction is DNA(n) + a 2'-deoxyribonucleoside 5'-triphosphate = DNA(n+1) + diphosphate. Its function is as follows. DNA-directed DNA polymerase involved in viral DNA replication. In Ornithodoros (relapsing fever ticks), this protein is DNA polymerase beta.